Consider the following 183-residue polypeptide: NADH-ubiquinone oxidoreductase chain 5 (183 aa).

Transmembrane regions (helical) follow at residues 7–27 (FMCYLSILTFFMPMLVTGDNS), 30–50 (LFLGWEGVGLASYLLIHFWFT), 111–131 (AITLICILLLIGAVGKSAQIG), and 144–164 (TPVSALIHAATMVTAGVFMIA).

This sequence belongs to the complex I subunit 5 family.

It localises to the mitochondrion inner membrane. It catalyses the reaction a ubiquinone + NADH + 5 H(+)(in) = a ubiquinol + NAD(+) + 4 H(+)(out). Functionally, core subunit of the mitochondrial membrane respiratory chain NADH dehydrogenase (Complex I) that is believed to belong to the minimal assembly required for catalysis. Complex I functions in the transfer of electrons from NADH to the respiratory chain. The immediate electron acceptor for the enzyme is believed to be ubiquinone. The chain is NADH-ubiquinone oxidoreductase chain 5 (NDH5) from Pisum sativum (Garden pea).